We begin with the raw amino-acid sequence, 323 residues long: tRNA U34 carboxymethyltransferase (323 aa).

Carboxy-S-adenosyl-L-methionine-binding positions include Lys-91, Trp-105, Lys-110, Gly-130, 152–154, 181–182, Met-196, Tyr-200, and Arg-315; these read DPT and IE.

This sequence belongs to the class I-like SAM-binding methyltransferase superfamily. CmoB family. In terms of assembly, homotetramer.

It catalyses the reaction carboxy-S-adenosyl-L-methionine + 5-hydroxyuridine(34) in tRNA = 5-carboxymethoxyuridine(34) in tRNA + S-adenosyl-L-homocysteine + H(+). Functionally, catalyzes carboxymethyl transfer from carboxy-S-adenosyl-L-methionine (Cx-SAM) to 5-hydroxyuridine (ho5U) to form 5-carboxymethoxyuridine (cmo5U) at position 34 in tRNAs. The polypeptide is tRNA U34 carboxymethyltransferase (Salmonella typhi).